A 398-amino-acid chain; its full sequence is Aspartate aminotransferase (398 aa).

L-aspartate is bound by residues G36, W132, and N185. Residue K248 is modified to N6-(pyridoxal phosphate)lysine. Position 376 (R376) interacts with L-aspartate.

This sequence belongs to the class-I pyridoxal-phosphate-dependent aminotransferase family. As to quaternary structure, homodimer. Requires pyridoxal 5'-phosphate as cofactor.

The protein resides in the cytoplasm. It catalyses the reaction L-aspartate + 2-oxoglutarate = oxaloacetate + L-glutamate. This Pseudomonas aeruginosa (strain ATCC 15692 / DSM 22644 / CIP 104116 / JCM 14847 / LMG 12228 / 1C / PRS 101 / PAO1) protein is Aspartate aminotransferase (aspC).